We begin with the raw amino-acid sequence, 389 residues long: Succinate--CoA ligase [ADP-forming] subunit beta (389 aa).

The ATP-grasp domain maps to 9-236; that stretch reads KELFAKHEVP…KDATDPLELK (228 aa). Residues lysine 45, 52-54, serine 94, and glutamate 99 contribute to the ATP site; that span reads GRG. The Mg(2+) site is built by asparagine 191 and aspartate 205. Substrate is bound by residues asparagine 256 and 318–320; that span reads GIT.

It belongs to the succinate/malate CoA ligase beta subunit family. Heterotetramer of two alpha and two beta subunits. It depends on Mg(2+) as a cofactor.

It carries out the reaction succinate + ATP + CoA = succinyl-CoA + ADP + phosphate. The catalysed reaction is GTP + succinate + CoA = succinyl-CoA + GDP + phosphate. It participates in carbohydrate metabolism; tricarboxylic acid cycle; succinate from succinyl-CoA (ligase route): step 1/1. Succinyl-CoA synthetase functions in the citric acid cycle (TCA), coupling the hydrolysis of succinyl-CoA to the synthesis of either ATP or GTP and thus represents the only step of substrate-level phosphorylation in the TCA. The beta subunit provides nucleotide specificity of the enzyme and binds the substrate succinate, while the binding sites for coenzyme A and phosphate are found in the alpha subunit. The protein is Succinate--CoA ligase [ADP-forming] subunit beta of Rhodococcus jostii (strain RHA1).